The sequence spans 421 residues: Subtilisin-like protease 2 (421 aa).

The signal sequence occupies residues 1 to 16 (MQLLNFGLLLLPFVAG). A propeptide spanning residues 17–122 (DLAPQPEPLL…VHPDQHVYLA (106 aa)) is cleaved from the precursor. Residues 36–122 (QYIVTLKEGL…VHPDQHVYLA (87 aa)) enclose the Inhibitor I9 domain. The region spanning 131–421 (RWGLGYMSSK…ERKFTLPKYF (291 aa)) is the Peptidase S8 domain. Residues aspartate 169 and histidine 201 each act as charge relay system in the active site. 3 N-linked (GlcNAc...) asparagine glycosylation sites follow: asparagine 248, asparagine 261, and asparagine 348. Serine 357 (charge relay system) is an active-site residue. Asparagine 388 carries an N-linked (GlcNAc...) asparagine glycan.

This sequence belongs to the peptidase S8 family.

Its subcellular location is the secreted. Its function is as follows. Secreted subtilisin-like serine protease with keratinolytic activity that contributes to pathogenicity. This is Subtilisin-like protease 2 (SUB2) from Trichophyton equinum (Horse ringworm fungus).